Consider the following 2837-residue polypeptide: Bifunctional DNA-directed RNA polymerase subunit beta-beta' (2837 aa).

The interval 1-1433 (MVDSSYMYAS…CLNVDLKQND (1433 aa)) is DNA-directed RNA polymerase subunit beta. The segment at 1436 to 2837 (IEDISHTNIA…ESVVAYDQSN (1402 aa)) is DNA-directed RNA polymerase subunit beta'. Zn(2+) contacts are provided by Cys1501, Cys1503, Cys1516, and Cys1519. 3 residues coordinate Mg(2+): Asp1893, Asp1895, and Asp1897. 4 residues coordinate Zn(2+): Cys2235, Cys2309, Cys2316, and Cys2319.

The protein in the N-terminal section; belongs to the RNA polymerase beta chain family. This sequence in the C-terminal section; belongs to the RNA polymerase beta' chain family. In terms of assembly, the RNAP catalytic core consists of 2 alpha, 1 beta/beta' and 1 omega subunit. When a sigma factor is associated with the core the holoenzyme is formed, which can initiate transcription. It depends on Mg(2+) as a cofactor. Zn(2+) serves as cofactor.

It carries out the reaction RNA(n) + a ribonucleoside 5'-triphosphate = RNA(n+1) + diphosphate. Functionally, DNA-dependent RNA polymerase catalyzes the transcription of DNA into RNA using the four ribonucleoside triphosphates as substrates. This is Bifunctional DNA-directed RNA polymerase subunit beta-beta' (rpoBC) from Wolbachia pipientis wMel.